The primary structure comprises 196 residues: V-type proton ATPase proteolipid subunit (196 aa).

Over 1-25 (MFQLLSFLLSGEATAVERIITDACP) the chain is Lumenal. A helical transmembrane segment spans residues 26–46 (VYAPFFGAMGVTAALVFTVMG). The Cytoplasmic portion of the chain corresponds to 47-72 (AAYGTAKASVGISNMGVMKPDLVIKA). Residues 73–93 (FIPVIFAGVIAIYGLIICVIL) form a helical membrane-spanning segment. The Lumenal portion of the chain corresponds to 94–111 (VGGIKPNANYTLMKSFTD). A helical membrane pass occupies residues 112 to 132 (LGAGLTVGLCGLAAGMAIGIV). The Cytoplasmic segment spans residues 133–150 (GDSGVRAFGQQPKLYVIM). Residues 151–171 (MLILIFSEALGLYGLIIGILL) form a helical membrane-spanning segment. Topologically, residues 172-196 (SSVSDTYCPGQALVPLNSGNVIGKN) are lumenal.

It belongs to the V-ATPase proteolipid subunit family. In terms of assembly, V-ATPase is a heteromultimeric enzyme composed of a peripheral catalytic V1 complex (main components: subunits A, B, C, D, E, and F) attached to an integral membrane V0 proton pore complex (main component: the proteolipid protein; which is present as a hexamer that forms the proton-conducting pore).

It is found in the vacuole membrane. Its function is as follows. Proton-conducting pore forming subunit of the membrane integral V0 complex of vacuolar ATPase. V-ATPase is responsible for acidifying a variety of intracellular compartments in eukaryotic cells. The chain is V-type proton ATPase proteolipid subunit (vatP) from Dictyostelium discoideum (Social amoeba).